The primary structure comprises 64 residues: Anti-sigma-G factor Gin (64 aa).

Zn(2+) contacts are provided by cysteine 11, cysteine 14, cysteine 30, and cysteine 33.

In terms of assembly, probably functions as a homodimer. Interacts with sigma-G factor, recognition occurs via the first 71 residues of sigma-G. The cofactor is Zn(2+).

In terms of biological role, an anti-sigma-G factor, prevents premature activation of sigma-G factor in the forespore; overexpression leads to 1000-fold reduction in spore formation, spore formation stops after engulfment. Overexpression also inhibits sigma-G transcription activation activity. When both Gin and sigma-G are expressed in E.coli Gin inhibits sigma-G, strongly suggesting Gin inhibits by direct physical interaction. The protein is Anti-sigma-G factor Gin of Bacillus subtilis (strain 168).